A 113-amino-acid chain; its full sequence is Non-specific lipid-transfer protein 6 (113 aa).

An N-terminal signal peptide occupies residues 1–19 (MRSLLLAVCLVLALHCGEA). Disulfide bonds link Cys-23/Cys-70, Cys-33/Cys-47, Cys-48/Cys-95, and Cys-68/Cys-109.

It belongs to the plant LTP family.

Functionally, plant non-specific lipid-transfer proteins transfer phospholipids as well as galactolipids across membranes. May play a role in wax or cutin deposition in the cell walls of expanding epidermal cells and certain secretory tissues. This chain is Non-specific lipid-transfer protein 6 (LTP6), found in Arabidopsis thaliana (Mouse-ear cress).